The chain runs to 309 residues: Methionyl-tRNA formyltransferase (309 aa).

Residue 110 to 113 coordinates (6S)-5,6,7,8-tetrahydrofolate; sequence SLLP.

This sequence belongs to the Fmt family.

The enzyme catalyses L-methionyl-tRNA(fMet) + (6R)-10-formyltetrahydrofolate = N-formyl-L-methionyl-tRNA(fMet) + (6S)-5,6,7,8-tetrahydrofolate + H(+). Functionally, attaches a formyl group to the free amino group of methionyl-tRNA(fMet). The formyl group appears to play a dual role in the initiator identity of N-formylmethionyl-tRNA by promoting its recognition by IF2 and preventing the misappropriation of this tRNA by the elongation apparatus. The sequence is that of Methionyl-tRNA formyltransferase from Caldanaerobacter subterraneus subsp. tengcongensis (strain DSM 15242 / JCM 11007 / NBRC 100824 / MB4) (Thermoanaerobacter tengcongensis).